Here is a 201-residue protein sequence, read N- to C-terminus: Glutathione peroxidase 1 (201 aa).

At Ser32 the chain carries Phosphoserine. Residue Sec47 is part of the active site. Sec47 is a non-standard amino acid (selenocysteine). 3 positions are modified to N6-acetyllysine; alternate: Lys86, Lys112, and Lys146. Residues Lys86, Lys112, and Lys146 each carry the N6-succinyllysine; alternate modification. Phosphoserine is present on residues Ser195 and Ser199.

This sequence belongs to the glutathione peroxidase family. Homotetramer. Interacts with MIEN1. During periods of oxidative stress, Sec-47 may react with a superoxide radical, irreversibly lose hydroselenide and be converted to dehydroalanine.

It is found in the cytoplasm. It localises to the mitochondrion. It carries out the reaction 2 glutathione + H2O2 = glutathione disulfide + 2 H2O. The enzyme catalyses a hydroperoxy polyunsaturated fatty acid + 2 glutathione = a hydroxy polyunsaturated fatty acid + glutathione disulfide + H2O. It catalyses the reaction tert-butyl hydroperoxide + 2 glutathione = tert-butanol + glutathione disulfide + H2O. The catalysed reaction is cumene hydroperoxide + 2 glutathione = 2-phenylpropan-2-ol + glutathione disulfide + H2O. It carries out the reaction (13S)-hydroperoxy-(9Z,11E)-octadecadienoate + 2 glutathione = (13S)-hydroxy-(9Z,11E)-octadecadienoate + glutathione disulfide + H2O. The enzyme catalyses (9S)-hydroperoxy-(10E,12Z)-octadecadienoate + 2 glutathione = (9S)-hydroxy-(10E,12Z)-octadecadienoate + glutathione disulfide + H2O. It catalyses the reaction (5S)-hydroperoxy-(6E,8Z,11Z,14Z)-eicosatetraenoate + 2 glutathione = (5S)-hydroxy-(6E,8Z,11Z,14Z)-eicosatetraenoate + glutathione disulfide + H2O. The catalysed reaction is (12S)-hydroperoxy-(5Z,8Z,10E,14Z)-eicosatetraenoate + 2 glutathione = (12S)-hydroxy-(5Z,8Z,10E,14Z)-eicosatetraenoate + glutathione disulfide + H2O. It carries out the reaction (12R)-hydroperoxy-(5Z,8Z,10E,14Z)-eicosatetraenoate + 2 glutathione = (12R)-hydroxy-(5Z,8Z,10E,14Z)-eicosatetraenoate + glutathione disulfide + H2O. The enzyme catalyses (15S)-hydroperoxy-(5Z,8Z,11Z,13E)-eicosatetraenoate + 2 glutathione = (15S)-hydroxy-(5Z,8Z,11Z,13E)-eicosatetraenoate + glutathione disulfide + H2O. It catalyses the reaction (5S)-hydroperoxy-(6E,8Z,11Z,14Z,17Z)-eicosapentaenoate + 2 glutathione = (5S)-hydroxy-(6E,8Z,11Z,14Z,17Z)-eicosapentaenoate + glutathione disulfide + H2O. The catalysed reaction is (12S)-hydroperoxy-(5Z,8Z,10E,14Z,17Z)-eicosapentaenoate + 2 glutathione = (12S)-hydroxy-(5Z,8Z,10E,14Z,17Z)-eicosapentaenoate + glutathione disulfide + H2O. It carries out the reaction (15S)-hydroperoxy-(5Z,8Z,11Z,13E,17Z)-eicosapentaenoate + 2 glutathione = (15S)-hydroxy-(5Z,8Z,11Z,13E,17Z)-eicosapentaenoate + glutathione disulfide + H2O. The enzyme catalyses (15S)-hydroperoxy-(11Z,13E)-eicosadienoate + 2 glutathione = (15S)-hydroxy-(11Z,13E)-eicosadienoate + glutathione disulfide + H2O. It catalyses the reaction (17S)-hydroperoxy-(4Z,7Z,10Z,13Z,15E,19Z)-docosahexaenoate + 2 glutathione = (17S)-hydroxy-(4Z,7Z,10Z,13Z,15E,19Z)-docosahexaenoate + glutathione disulfide + H2O. In terms of biological role, catalyzes the reduction of hydroperoxides in a glutathione-dependent manner thus regulating cellular redox homeostasis. Can reduce small soluble hydroperoxides such as H2O2, cumene hydroperoxide and tert-butyl hydroperoxide, as well as several fatty acid-derived hydroperoxides. In platelets catalyzes the reduction of 12-hydroperoxyeicosatetraenoic acid, the primary product of the arachidonate 12-lipoxygenase pathway. The protein is Glutathione peroxidase 1 (GPX1) of Macaca fuscata fuscata (Japanese macaque).